The chain runs to 270 residues: Putative hydro-lyase Noca_0093 (270 aa).

The protein belongs to the D-glutamate cyclase family.

In Nocardioides sp. (strain ATCC BAA-499 / JS614), this protein is Putative hydro-lyase Noca_0093.